The chain runs to 290 residues: Ribosomal RNA small subunit methyltransferase A (290 aa).

The S-adenosyl-L-methionine site is built by Asn27, Leu29, Gly54, Glu75, Asp100, and Asn125.

It belongs to the class I-like SAM-binding methyltransferase superfamily. rRNA adenine N(6)-methyltransferase family. RsmA subfamily.

The protein localises to the cytoplasm. The catalysed reaction is adenosine(1518)/adenosine(1519) in 16S rRNA + 4 S-adenosyl-L-methionine = N(6)-dimethyladenosine(1518)/N(6)-dimethyladenosine(1519) in 16S rRNA + 4 S-adenosyl-L-homocysteine + 4 H(+). Its function is as follows. Specifically dimethylates two adjacent adenosines (A1518 and A1519) in the loop of a conserved hairpin near the 3'-end of 16S rRNA in the 30S particle. May play a critical role in biogenesis of 30S subunits. This chain is Ribosomal RNA small subunit methyltransferase A, found in Streptococcus pyogenes serotype M5 (strain Manfredo).